The chain runs to 424 residues: Glutamate-1-semialdehyde 2,1-aminomutase (424 aa).

Lys-258 carries the post-translational modification N6-(pyridoxal phosphate)lysine.

This sequence belongs to the class-III pyridoxal-phosphate-dependent aminotransferase family. HemL subfamily. Pyridoxal 5'-phosphate serves as cofactor.

It is found in the cytoplasm. The catalysed reaction is (S)-4-amino-5-oxopentanoate = 5-aminolevulinate. It participates in porphyrin-containing compound metabolism; protoporphyrin-IX biosynthesis; 5-aminolevulinate from L-glutamyl-tRNA(Glu): step 2/2. The polypeptide is Glutamate-1-semialdehyde 2,1-aminomutase (Pyrobaculum neutrophilum (strain DSM 2338 / JCM 9278 / NBRC 100436 / V24Sta) (Thermoproteus neutrophilus)).